Reading from the N-terminus, the 521-residue chain is Bacillolysin (521 aa).

The N-terminal stretch at M1–A27 is a signal peptide. The propeptide at A28–H221 is activation peptide. Ca(2+) is bound at residue D360. H364 contributes to the Zn(2+) binding site. Residue E365 is part of the active site. Residues H368 and E388 each coordinate Zn(2+). Residues D399, D402, D404, and E407 each coordinate Ca(2+). H449 functions as the Proton donor in the catalytic mechanism.

This sequence belongs to the peptidase M4 family. Requires Ca(2+) as cofactor. The cofactor is Zn(2+).

Its subcellular location is the secreted. It carries out the reaction Similar, but not identical, to that of thermolysin.. Its function is as follows. Extracellular zinc metalloprotease. This Bacillus subtilis subsp. amylosacchariticus protein is Bacillolysin (nprE).